We begin with the raw amino-acid sequence, 139 residues long: Large ribosomal subunit protein uL16 (139 aa).

Basic residues predominate over residues methionine 1 to lysine 11. Positions methionine 1–phenylalanine 30 are disordered.

The protein belongs to the universal ribosomal protein uL16 family. Part of the 50S ribosomal subunit.

Functionally, binds 23S rRNA and is also seen to make contacts with the A and possibly P site tRNAs. This is Large ribosomal subunit protein uL16 from Mycoplasmopsis synoviae (strain 53) (Mycoplasma synoviae).